The following is a 211-amino-acid chain: MKKITRIGIGGPVGSGKTAIIEAITPLMLDLGIKVLIITNDVVTTEDARHVQRTLKGVLVEEKIIGVETGACPHTAVREDPSMNLAAVEDMESRFPDTDVVLIESGGDNLTLTFSPALVDFFIYVIDVAAGDKIPRKNGPGISQSDILVINKTDLAPYVGASLEVMDRDSKFMRGDKPFIFTNCKTGEGIPELVHLIHDMALFDVPIKEAS.

11–18 (GPVGSGKT) contacts GTP.

The protein belongs to the SIMIBI class G3E GTPase family. UreG subfamily. In terms of assembly, homodimer. UreD, UreF and UreG form a complex that acts as a GTP-hydrolysis-dependent molecular chaperone, activating the urease apoprotein by helping to assemble the nickel containing metallocenter of UreC. The UreE protein probably delivers the nickel.

It is found in the cytoplasm. Functionally, facilitates the functional incorporation of the urease nickel metallocenter. This process requires GTP hydrolysis, probably effectuated by UreG. In Laribacter hongkongensis (strain HLHK9), this protein is Urease accessory protein UreG.